Here is a 180-residue protein sequence, read N- to C-terminus: Interleukin-1-binding protein (180 aa).

A signal peptide spans 1 to 20 (MSILPVIFLPIFFYSPFVQT). Residues N80, N103, and N113 are each glycosylated (N-linked (GlcNAc...) asparagine; by host).

The protein belongs to the interleukin-1 receptor family. As to quaternary structure, interacts with mouse Il1b.

It localises to the secreted. Its function is as follows. May reduce the host inflammatory response by interacting with inteleukin-1 beta (Il1b) and thus decreasing the association between IL1B and its cellular receptor. This Monkeypox virus protein is Interleukin-1-binding protein (OPG201).